The sequence spans 302 residues: 33 kDa chaperonin (302 aa).

2 cysteine pairs are disulfide-bonded: cysteine 234-cysteine 236 and cysteine 267-cysteine 270.

Belongs to the HSP33 family. Under oxidizing conditions two disulfide bonds are formed involving the reactive cysteines. Under reducing conditions zinc is bound to the reactive cysteines and the protein is inactive.

Its subcellular location is the cytoplasm. Functionally, redox regulated molecular chaperone. Protects both thermally unfolding and oxidatively damaged proteins from irreversible aggregation. Plays an important role in the bacterial defense system toward oxidative stress. The chain is 33 kDa chaperonin from Neisseria gonorrhoeae (strain NCCP11945).